The chain runs to 103 residues: Large ribosomal subunit protein uL24 (103 aa).

Belongs to the universal ribosomal protein uL24 family. As to quaternary structure, part of the 50S ribosomal subunit.

One of two assembly initiator proteins, it binds directly to the 5'-end of the 23S rRNA, where it nucleates assembly of the 50S subunit. In terms of biological role, one of the proteins that surrounds the polypeptide exit tunnel on the outside of the subunit. This chain is Large ribosomal subunit protein uL24, found in Dehalococcoides mccartyi (strain ATCC BAA-2100 / JCM 16839 / KCTC 5957 / BAV1).